Consider the following 491-residue polypeptide: Transcription factor AP-2-alpha (491 aa).

Positions 74–161 are disordered; it reads GASNGTARLP…GQRQSQESGL (88 aa). A PPxY motif motif is present at residues 111–116; sequence YFPPPY. Low complexity-rich tracts occupy residues 119–128 and 142–155; these read IYPQSQDPYS and QPQP…GQRQ. Residues lysine 231 and lysine 238 each participate in a glycyl lysine isopeptide (Lys-Gly) (interchain with G-Cter in SUMO2) cross-link. At serine 293 the chain carries Phosphoserine; by PKA. Residues 334–464 are H-S-H (helix-span-helix), dimerization; sequence RRKAANVTLL…YLTEALKAMD (131 aa). Polar residues predominate over residues 468 to 481; the sequence is LSNNPNSHTDNSAK. Positions 468-491 are disordered; that stretch reads LSNNPNSHTDNSAKSSDKEEKHRK. Over residues 482 to 491 the composition is skewed to basic and acidic residues; the sequence is SSDKEEKHRK.

This sequence belongs to the AP-2 family. Binds DNA as a dimer. Can form homodimers or heterodimers with other AP-2 family members. Interacts with WWOX. Interacts with CITED4. Interacts with UBE2I. Interacts with RALBP1 in a complex also containing EPN1 and NUMB during interphase and mitosis. Interacts with KCTD1; this interaction represses transcription activation. Interacts (via C-terminus) with CITED2 (via C-terminus); the interaction stimulates TFAP2A-transcriptional activation. Interacts (via N-terminus) with EP300 (via N-terminus); the interaction requires CITED2. Interacts with KCTD15; this interaction inhibits TFAP2A transcriptional activation.

It is found in the nucleus. Functionally, sequence-specific DNA-binding protein that interacts with inducible viral and cellular enhancer elements to regulate transcription of selected genes. AP-2 factors bind to the consensus sequence 5'-GCCNNNGGC-3' and activate genes involved in a large spectrum of important biological functions including proper eye, face, body wall, limb and neural tube development. They also suppress a number of genes including MCAM/MUC18, C/EBP alpha and MYC. AP-2-alpha is the only AP-2 protein required for early morphogenesis of the lens vesicle. Together with the CITED2 coactivator, stimulates the PITX2 P1 promoter transcription activation. Associates with chromatin to the PITX2 P1 promoter region. This chain is Transcription factor AP-2-alpha (TFAP2A), found in Ovis aries (Sheep).